The primary structure comprises 90 residues: Probable small nuclear ribonucleoprotein E (90 aa).

The Sm domain maps to 14–89 (VNLIFRYLQN…ITLIHAAAQE (76 aa)).

It belongs to the snRNP Sm proteins family. As to quaternary structure, core component of the spliceosomal U1, U2, U4 and U5 small nuclear ribonucleoproteins (snRNPs), the building blocks of the spliceosome.

The protein localises to the nucleus. The protein resides in the cytoplasm. Its subcellular location is the cytosol. In terms of biological role, plays a role in pre-mRNA splicing as a core component of the spliceosomal U1, U2, U4 and U5 small nuclear ribonucleoproteins (snRNPs), the building blocks of the spliceosome. The chain is Probable small nuclear ribonucleoprotein E (snr-6) from Caenorhabditis briggsae.